Here is a 354-residue protein sequence, read N- to C-terminus: Glycerol-3-phosphate dehydrogenase [NAD(P)+] (354 aa).

Residues Ser-27, Phe-28, Arg-48, and Lys-121 each contribute to the NADPH site. Sn-glycerol 3-phosphate is bound by residues Lys-121 and Gly-149. An NADPH-binding site is contributed by Ala-153. Sn-glycerol 3-phosphate-binding residues include Lys-204, Asp-257, Ser-267, Arg-268, and Asn-269. The active-site Proton acceptor is the Lys-204. NADPH is bound at residue Arg-268. NADPH is bound by residues Val-292 and Glu-294.

This sequence belongs to the NAD-dependent glycerol-3-phosphate dehydrogenase family.

It localises to the cytoplasm. The catalysed reaction is sn-glycerol 3-phosphate + NAD(+) = dihydroxyacetone phosphate + NADH + H(+). The enzyme catalyses sn-glycerol 3-phosphate + NADP(+) = dihydroxyacetone phosphate + NADPH + H(+). It participates in membrane lipid metabolism; glycerophospholipid metabolism. Its function is as follows. Catalyzes the reduction of the glycolytic intermediate dihydroxyacetone phosphate (DHAP) to sn-glycerol 3-phosphate (G3P), the key precursor for phospholipid synthesis. In Pseudomonas fluorescens (strain Pf0-1), this protein is Glycerol-3-phosphate dehydrogenase [NAD(P)+].